Reading from the N-terminus, the 288-residue chain is MVLEIFRKPKYVTVRPEKTETTQGNERRDIPEGLWVKCSRCNEILYTKELDKNFKVCHKCNFHFRLNAQERIHMTLDEGSFQERDNELITLNPLNFPDYQEKIQSAQKATELKEAVVTGEGTIGGNPVVIGVMDSHFIMGSMGSVVGEKIARAIERAIEKKLPVVLFSTSGGARMQEGILSLMQMAKTAAALAKLDEAGLLYVAVLTDPTTGGVTASFASLGDIIIAEPGALIGFTGPRVIEQTIRQKLPEGFQRAEFLRKHGMVDMIVNRPQLKDTLANILSLHGTN.

Residues 34-288 enclose the CoA carboxyltransferase N-terminal domain; sequence LWVKCSRCNE…ANILSLHGTN (255 aa). The Zn(2+) site is built by cysteine 38, cysteine 41, cysteine 57, and cysteine 60. The C4-type zinc finger occupies 38-60; sequence CSRCNEILYTKELDKNFKVCHKC.

It belongs to the AccD/PCCB family. In terms of assembly, acetyl-CoA carboxylase is a heterohexamer composed of biotin carboxyl carrier protein (AccB), biotin carboxylase (AccC) and two subunits each of ACCase subunit alpha (AccA) and ACCase subunit beta (AccD). Zn(2+) is required as a cofactor.

Its subcellular location is the cytoplasm. It carries out the reaction N(6)-carboxybiotinyl-L-lysyl-[protein] + acetyl-CoA = N(6)-biotinyl-L-lysyl-[protein] + malonyl-CoA. The protein operates within lipid metabolism; malonyl-CoA biosynthesis; malonyl-CoA from acetyl-CoA: step 1/1. Functionally, component of the acetyl coenzyme A carboxylase (ACC) complex. Biotin carboxylase (BC) catalyzes the carboxylation of biotin on its carrier protein (BCCP) and then the CO(2) group is transferred by the transcarboxylase to acetyl-CoA to form malonyl-CoA. This chain is Acetyl-coenzyme A carboxylase carboxyl transferase subunit beta, found in Desulforamulus reducens (strain ATCC BAA-1160 / DSM 100696 / MI-1) (Desulfotomaculum reducens).